The primary structure comprises 92 residues: Non-specific lipid-transfer protein 2 (92 aa).

4 disulfides stabilise this stretch: Cys4-Cys52, Cys14-Cys28, Cys29-Cys74, and Cys50-Cys88.

Belongs to the plant LTP family. In terms of tissue distribution, expressed in seeds and, at very low levels, in pulp of fruit (at protein level).

Functionally, plant non-specific lipid-transfer proteins transfer phospholipids as well as galactolipids across membranes. May play a role in wax or cutin deposition in the cell walls of expanding epidermal cells and certain secretory tissues. This chain is Non-specific lipid-transfer protein 2, found in Actinidia deliciosa (Kiwi).